The primary structure comprises 193 residues: 7-methyl-GTP pyrophosphatase (193 aa).

The Proton acceptor role is filled by Asp-69.

This sequence belongs to the Maf family. YceF subfamily. A divalent metal cation serves as cofactor.

It localises to the cytoplasm. It carries out the reaction N(7)-methyl-GTP + H2O = N(7)-methyl-GMP + diphosphate + H(+). Functionally, nucleoside triphosphate pyrophosphatase that hydrolyzes 7-methyl-GTP (m(7)GTP). May have a dual role in cell division arrest and in preventing the incorporation of modified nucleotides into cellular nucleic acids. This is 7-methyl-GTP pyrophosphatase from Chromohalobacter salexigens (strain ATCC BAA-138 / DSM 3043 / CIP 106854 / NCIMB 13768 / 1H11).